A 938-amino-acid polypeptide reads, in one-letter code: Kexin (938 aa).

The first 20 residues, 1 to 20 (MLPIKLLIFILGYLLSPTLQ), serve as a signal peptide directing secretion. Residues asparagine 41 and asparagine 193 are each glycosylated (N-linked (GlcNAc...) asparagine). In terms of domain architecture, Peptidase S8 spans 179–489 (QWHLINLKYP…YGKTDAYKMV (311 aa)). Active-site charge relay system residues include aspartate 213 and histidine 251. 2 disulfide bridges follow: cysteine 267-cysteine 414 and cysteine 359-cysteine 389. The active-site Charge relay system is serine 422. Asparagine 441, asparagine 512, asparagine 539, and asparagine 599 each carry an N-linked (GlcNAc...) asparagine glycan. The 150-residue stretch at 498-647 (VKPQAWYYSD…QFRIFGESID (150 aa)) folds into the P/Homo B domain. Residues 671-768 (EKQNSKSTTT…DNDNDNGNKK (98 aa)) are disordered. The segment covering 677 to 691 (STTTTSSTTTATTTS) has biased composition (low complexity). The segment covering 711-735 (KVDNSASITTSQTASLTSSNEQHQP) has biased composition (polar residues). Positions 740-762 (SDSDSDTDDENKQEGEEDNDNDN) are enriched in acidic residues. The helical transmembrane segment at 775–795 (GFYLMSIAVVGFIAVLLVMKF) threads the bilayer. Over 796 to 924 (HKTPGSGRRR…SGTSTKKYKD (129 aa)) the chain is Cytoplasmic. Positions 798 to 808 (TPGSGRRRRRR) are enriched in basic residues. The tract at residues 798 to 938 (TPGSGRRRRR…EDHKDVVGTQ (141 aa)) is disordered. Residues 820–831 (DYSDSDDDEDDF) are compositionally biased toward acidic residues. The segment covering 832–849 (DTRRADDDSFDLGHRNDQ) has biased composition (basic and acidic residues). A compositionally biased stretch (low complexity) spans 850 to 859 (RVVSASQQQR). Basic and acidic residues predominate over residues 860-874 (QYDRQQDETRDRLFD). Residues 902 to 919 (QQSAKAPSNSEGNSGTST) show a composition bias toward polar residues. Residues 921-938 (KYKDNEADEDHKDVVGTQ) show a composition bias toward basic and acidic residues.

This sequence belongs to the peptidase S8 family. Furin subfamily. The cofactor is Ca(2+). In terms of processing, O-glycosylated.

It is found in the golgi apparatus. The protein localises to the trans-Golgi network membrane. The enzyme catalyses Cleavage of -Lys-Arg-|-Xaa- and -Arg-Arg-|-Xaa- bonds to process yeast alpha-factor pheromone and killer toxin precursors.. The chain is Kexin (KEX2) from Candida albicans (strain WO-1) (Yeast).